Here is a 316-residue protein sequence, read N- to C-terminus: Methionyl-tRNA formyltransferase (316 aa).

112 to 115 (SLLP) serves as a coordination point for (6S)-5,6,7,8-tetrahydrofolate.

This sequence belongs to the Fmt family.

The enzyme catalyses L-methionyl-tRNA(fMet) + (6R)-10-formyltetrahydrofolate = N-formyl-L-methionyl-tRNA(fMet) + (6S)-5,6,7,8-tetrahydrofolate + H(+). Attaches a formyl group to the free amino group of methionyl-tRNA(fMet). The formyl group appears to play a dual role in the initiator identity of N-formylmethionyl-tRNA by promoting its recognition by IF2 and preventing the misappropriation of this tRNA by the elongation apparatus. In Flavobacterium psychrophilum (strain ATCC 49511 / DSM 21280 / CIP 103535 / JIP02/86), this protein is Methionyl-tRNA formyltransferase.